Here is a 109-residue protein sequence, read N- to C-terminus: ATPase inhibitor, mitochondrial (109 aa).

Residues Met-1 to Arg-22 constitute a mitochondrion transit peptide. The tract at residues Leu-27 to Ala-56 is N-terminal inhibitory region. A disordered region spans residues Leu-27–Asp-109. Residues Leu-30–Ser-43 show a composition bias toward gly residues. Basic and acidic residues-rich tracts occupy residues Gln-55–Glu-69 and His-77–Arg-98. Residues Ile-71–Asp-109 adopt a coiled-coil conformation. Residues His-78–Asp-109 are antiparallel alpha-helical coiled coil region. Residues His-99–Asp-109 show a composition bias toward basic residues.

It belongs to the ATPase inhibitor family. Homodimer; represents the active form and is present at a pH value below 6.5. Homotetramer; represents the inactive form and is present at a pH value above 7.0.

The protein resides in the mitochondrion. In terms of biological role, endogenous F(1)F(o)-ATPase inhibitor limiting ATP depletion when the mitochondrial membrane potential falls below a threshold and the F(1)F(o)-ATP synthase starts hydrolyzing ATP to pump protons out of the mitochondrial matrix. Required to avoid the consumption of cellular ATP when the F(1)F(o)-ATP synthase enzyme acts as an ATP hydrolase. Indirectly acts as a regulator of heme synthesis in erythroid tissues: regulates heme synthesis by modulating the mitochondrial pH and redox potential, allowing fech to efficiently catalyze the incorporation of iron into protoporphyrin IX to produce heme. The chain is ATPase inhibitor, mitochondrial from Xenopus tropicalis (Western clawed frog).